The following is a 567-amino-acid chain: Proline--tRNA ligase (567 aa).

This sequence belongs to the class-II aminoacyl-tRNA synthetase family. ProS type 1 subfamily. Homodimer.

It is found in the cytoplasm. It catalyses the reaction tRNA(Pro) + L-proline + ATP = L-prolyl-tRNA(Pro) + AMP + diphosphate. Its function is as follows. Catalyzes the attachment of proline to tRNA(Pro) in a two-step reaction: proline is first activated by ATP to form Pro-AMP and then transferred to the acceptor end of tRNA(Pro). As ProRS can inadvertently accommodate and process non-cognate amino acids such as alanine and cysteine, to avoid such errors it has two additional distinct editing activities against alanine. One activity is designated as 'pretransfer' editing and involves the tRNA(Pro)-independent hydrolysis of activated Ala-AMP. The other activity is designated 'posttransfer' editing and involves deacylation of mischarged Ala-tRNA(Pro). The misacylated Cys-tRNA(Pro) is not edited by ProRS. This is Proline--tRNA ligase from Staphylococcus aureus (strain USA300).